The following is a 388-amino-acid chain: 1-deoxy-D-xylulose 5-phosphate reductoisomerase (388 aa).

Threonine 13, glycine 14, serine 15, isoleucine 16, arginine 40, asparagine 41, and asparagine 124 together coordinate NADPH. Lysine 125 lines the 1-deoxy-D-xylulose 5-phosphate pocket. Glutamate 126 contacts NADPH. Mn(2+) is bound at residue aspartate 150. Serine 151, glutamate 152, serine 176, and histidine 199 together coordinate 1-deoxy-D-xylulose 5-phosphate. A Mn(2+)-binding site is contributed by glutamate 152. Glycine 205 is a binding site for NADPH. The 1-deoxy-D-xylulose 5-phosphate site is built by serine 212, asparagine 217, lysine 218, and glutamate 221. A Mn(2+)-binding site is contributed by glutamate 221.

The protein belongs to the DXR family. In terms of assembly, homodimer. It depends on Mg(2+) as a cofactor. Mn(2+) is required as a cofactor. The cofactor is Co(2+).

The catalysed reaction is 2-C-methyl-D-erythritol 4-phosphate + NADP(+) = 1-deoxy-D-xylulose 5-phosphate + NADPH + H(+). Its pathway is isoprenoid biosynthesis; isopentenyl diphosphate biosynthesis via DXP pathway; isopentenyl diphosphate from 1-deoxy-D-xylulose 5-phosphate: step 1/6. Competitively inhibited by the antibiotic fosmidomycin. In terms of biological role, catalyzes the NADPH-dependent rearrangement and reduction of 1-deoxy-D-xylulose-5-phosphate (DXP) to 2-C-methyl-D-erythritol 4-phosphate (MEP). Cannot use NADH instead of NADPH as the reducing agent. This chain is 1-deoxy-D-xylulose 5-phosphate reductoisomerase, found in Zymomonas mobilis subsp. mobilis (strain ATCC 31821 / ZM4 / CP4).